Consider the following 269-residue polypeptide: Glutamate racemase (269 aa).

Residues 7 to 8 (DS) and 39 to 40 (YG) contribute to the substrate site. Cysteine 70 serves as the catalytic Proton donor/acceptor. 71–72 (NT) contributes to the substrate binding site. Cysteine 194 acts as the Proton donor/acceptor in catalysis. Substrate is bound at residue 195-196 (TH).

It belongs to the aspartate/glutamate racemases family.

The catalysed reaction is L-glutamate = D-glutamate. The protein operates within cell wall biogenesis; peptidoglycan biosynthesis. Its function is as follows. Provides the (R)-glutamate required for cell wall biosynthesis. This Ruegeria pomeroyi (strain ATCC 700808 / DSM 15171 / DSS-3) (Silicibacter pomeroyi) protein is Glutamate racemase.